Here is a 426-residue protein sequence, read N- to C-terminus: DNA damage-binding protein 2 (426 aa).

Over residues 1-11 (MAPRKRPENQK) the composition is skewed to basic and acidic residues. A disordered region spans residues 1 to 33 (MAPRKRPENQKTPEVVVRPKSKRNRSPRELEPE). Ser-26 is modified (phosphoserine). Residues Lys-35 and Lys-76 each carry the N6-acetyllysine modification. Required for interaction with DDB1 stretches follow at residues 67–78 (SIVRALHQHKLG) and 86–97 (QQGLQQSFLNSL). WD repeat units lie at residues 115–150 (SLAW…TFIK), 158–193 (ITGM…LRVF), 202–237 (WFCS…LWNL), 243–286 (KVTH…SLPH), and 289–328 (PVNA…LIPH). A DWD box motif is present at residues 255–273 (WLLATASVDQTVKIWDLRQ). The segment at 333-335 (FQH) is photolesion recognition. WD repeat units follow at residues 342-385 (SWHP…MYQL) and 395-419 (SLNE…VWSP).

The protein belongs to the WD repeat DDB2/WDR76 family. Component of the UV-DDB complex which includes DDB1 and DDB2. The UV-DDB complex interacts with monoubiquitinated histone H2A and binds to XPC via the DDB2 subunit. Component of the DCX (DDB1-CUL4-X-box) E3 ubiquitin-protein ligase complex DDB1-CUL4-ROC1 (also known as CUL4-DDB-ROC1 and CUL4-DDB-RBX1), which includes CUL4A or CUL4B, DDB1, DDB2 and RBX1. DDB2 may function as the substrate recognition module within this complex. The DDB1-CUL4-ROC1 complex may associate with the COP9 signalosome, and this inhibits the E3 ubiquitin-protein ligase activity of the complex. A large number of other DCX complexes may also exist in which an alternate substrate targeting subunit replaces DDB2. These targeting subunits are generally known as DCAF (DDB1- and CUL4-associated factor) or CDW (CUL4-DDB1-associated WD40-repeat) proteins. In terms of processing, phosphorylation by ABL1 negatively regulate UV-DDB activity. Post-translationally, ubiquitinated by CUL4A in response to UV irradiation. Ubiquitination appears to both impair DNA-binding and promotes ubiquitin-dependent proteolysis. Degradation of DDB2 at sites of DNA damage may be a prerequisite for their recognition by XPC and subsequent repair. CUL4A-mediated degradation appears to be promoted by ABL1. Ubiquitinated, leading to proteasomal degradation, and deubiquitinated by USP24. Deubiquitinated by USP44; leading to its stabilization on DNA lesions. In terms of processing, acetylated. Deacetylation by SIRT6 in response to UV stress facilitates nucleotide excision repair pathway (the NER pathway) transduction.

It localises to the nucleus. Its subcellular location is the chromosome. It participates in protein modification; protein ubiquitination. In terms of biological role, protein, which is both involved in DNA repair and protein ubiquitination, as part of the UV-DDB complex and DCX (DDB1-CUL4-X-box) complexes, respectively. Core component of the UV-DDB complex (UV-damaged DNA-binding protein complex), a complex that recognizes UV-induced DNA damage and recruit proteins of the nucleotide excision repair pathway (the NER pathway) to initiate DNA repair. The UV-DDB complex preferentially binds to cyclobutane pyrimidine dimers (CPD), 6-4 photoproducts (6-4 PP), apurinic sites and short mismatches. Also functions as the substrate recognition module for the DCX (DDB2-CUL4-X-box) E3 ubiquitin-protein ligase complex DDB2-CUL4-ROC1 (also known as CUL4-DDB-ROC1 and CUL4-DDB-RBX1). The DDB2-CUL4-ROC1 complex may ubiquitinate histone H2A, histone H3 and histone H4 at sites of UV-induced DNA damage. The ubiquitination of histones may facilitate their removal from the nucleosome and promote subsequent DNA repair. The DDB2-CUL4-ROC1 complex also ubiquitinates XPC, which may enhance DNA-binding by XPC and promote NER. The DDB2-CUL4-ROC1 complex also ubiquitinates KAT7/HBO1 in response to DNA damage, leading to its degradation: recognizes KAT7/HBO1 following phosphorylation by ATR. This Bos taurus (Bovine) protein is DNA damage-binding protein 2 (DDB2).